Reading from the N-terminus, the 511-residue chain is Coatomer subunit delta (511 aa).

The segment covering 168–177 (QARRDAERQG) has biased composition (basic and acidic residues). The interval 168–188 (QARRDAERQGKKAPGFGGFGS) is disordered. Serine 223 carries the post-translational modification Phosphoserine. 2 positions are modified to N6-acetyllysine: lysine 233 and lysine 241. Position 244 is a phosphoserine (serine 244). Residues 271–511 (MESVHMKIEE…TFLVDKYEIL (241 aa)) form the MHD domain. N6-acetyllysine is present on residues lysine 309 and lysine 351. The residue at position 493 (serine 493) is a Phosphoserine.

This sequence belongs to the adaptor complexes medium subunit family. Delta-COP subfamily. Oligomeric complex that consists of at least the alpha, beta, beta', gamma, delta, epsilon and zeta subunits. Ubiquitously expressed.

The protein resides in the cytoplasm. It localises to the golgi apparatus membrane. The protein localises to the cytoplasmic vesicle. It is found in the COPI-coated vesicle membrane. In terms of biological role, component of the coatomer, a cytosolic protein complex that binds to dilysine motifs and reversibly associates with Golgi non-clathrin-coated vesicles, which further mediate biosynthetic protein transport from the ER, via the Golgi up to the trans Golgi network. The coatomer complex is required for budding from Golgi membranes, and is essential for the retrograde Golgi-to-ER transport of dilysine-tagged proteins. In mammals, the coatomer can only be recruited by membranes associated to ADP-ribosylation factors (ARFs), which are small GTP-binding proteins; the complex also influences the Golgi structural integrity, as well as the processing, activity, and endocytic recycling of LDL receptors. The chain is Coatomer subunit delta (ARCN1) from Homo sapiens (Human).